The chain runs to 264 residues: uncharacterized protein (264 aa).

3 helical membrane passes run Leu-48 to Phe-68, Ile-112 to Ala-132, and Leu-142 to Ile-162. A Phosphoserine modification is found at Ser-260.

It is found in the membrane. This is an uncharacterized protein from Schizosaccharomyces pombe (strain 972 / ATCC 24843) (Fission yeast).